The following is a 372-amino-acid chain: Biglycan (372 aa).

An N-terminal signal peptide occupies residues 1–19 (MPTMWPLWLLASLLALSQA). The propeptide occupies 20 to 40 (LPFEQKGFWDFTLDDGLPMLN). 2 O-linked (Xyl...) (glycosaminoglycan) serine glycosylation sites follow: serine 45 and serine 51. Intrachain disulfides connect cysteine 67–cysteine 73 and cysteine 71–cysteine 80. LRR repeat units follow at residues 86 to 106 (KAVP…NNEI), 107 to 130 (SELR…NNKI), 131 to 154 (SKIH…KNHL), 155 to 175 (VEIP…DNRI), 176 to 199 (RKVP…GNPL), 200 to 224 (ENSG…EAKL), 225 to 245 (TGIP…HNKI), 246 to 269 (QAIE…HNQI), 270 to 293 (RMIE…NNKL), 294 to 316 (SRVP…TNNI), 317 to 346 (TKVG…NNPV), and 347 to 372 (PYWE…NYKK). Residues asparagine 274 and asparagine 315 are each glycosylated (N-linked (GlcNAc...) asparagine). An intrachain disulfide couples cysteine 325 to cysteine 358.

Belongs to the small leucine-rich proteoglycan (SLRP) family. SLRP class I subfamily. Homodimer. Forms a ternary complex with MFAP2 and ELN. In terms of processing, the two attached glycosaminoglycan chains can be either chondroitin sulfate or dermatan sulfate.

It localises to the secreted. It is found in the extracellular space. Its subcellular location is the extracellular matrix. Functionally, may be involved in collagen fiber assembly. The chain is Biglycan (BGN) from Equus caballus (Horse).